The chain runs to 225 residues: NAD(P)H-quinone oxidoreductase subunit K, chloroplastic (225 aa).

[4Fe-4S] cluster contacts are provided by C43, C44, C108, and C139.

The protein belongs to the complex I 20 kDa subunit family. As to quaternary structure, NDH is composed of at least 16 different subunits, 5 of which are encoded in the nucleus. The cofactor is [4Fe-4S] cluster.

It localises to the plastid. Its subcellular location is the chloroplast thylakoid membrane. It carries out the reaction a plastoquinone + NADH + (n+1) H(+)(in) = a plastoquinol + NAD(+) + n H(+)(out). The enzyme catalyses a plastoquinone + NADPH + (n+1) H(+)(in) = a plastoquinol + NADP(+) + n H(+)(out). NDH shuttles electrons from NAD(P)H:plastoquinone, via FMN and iron-sulfur (Fe-S) centers, to quinones in the photosynthetic chain and possibly in a chloroplast respiratory chain. The immediate electron acceptor for the enzyme in this species is believed to be plastoquinone. Couples the redox reaction to proton translocation, and thus conserves the redox energy in a proton gradient. This is NAD(P)H-quinone oxidoreductase subunit K, chloroplastic from Lemna minor (Common duckweed).